The sequence spans 312 residues: Malate dehydrogenase (312 aa).

NAD(+)-binding positions include 7–13 (GAAGGIG) and Asp-34. 2 residues coordinate substrate: Arg-81 and Arg-87. Residues Asn-94 and 117 to 119 (ITN) contribute to the NAD(+) site. The substrate site is built by Asn-119 and Arg-153. Catalysis depends on His-177, which acts as the Proton acceptor. Met-227 provides a ligand contact to NAD(+).

This sequence belongs to the LDH/MDH superfamily. MDH type 1 family. In terms of assembly, homodimer.

It carries out the reaction (S)-malate + NAD(+) = oxaloacetate + NADH + H(+). Functionally, catalyzes the reversible oxidation of malate to oxaloacetate. This is Malate dehydrogenase from Cronobacter sakazakii (strain ATCC BAA-894) (Enterobacter sakazakii).